We begin with the raw amino-acid sequence, 331 residues long: L-lactate dehydrogenase A chain (331 aa).

NAD(+) is bound by residues G29–K57 and R98. 3 residues coordinate substrate: R105, N137, and R168. N137 provides a ligand contact to NAD(+). H192 (proton acceptor) is an active-site residue. Residue T247 participates in substrate binding.

Belongs to the LDH/MDH superfamily. LDH family. As to quaternary structure, homotetramer.

The protein localises to the cytoplasm. The enzyme catalyses (S)-lactate + NAD(+) = pyruvate + NADH + H(+). It functions in the pathway fermentation; pyruvate fermentation to lactate; (S)-lactate from pyruvate: step 1/1. Functionally, interconverts simultaneously and stereospecifically pyruvate and lactate with concomitant interconversion of NADH and NAD(+). The protein is L-lactate dehydrogenase A chain (ldha) of Paranotothenia magellanica (Maori cod).